Reading from the N-terminus, the 546-residue chain is Membrane protein insertase YidC (546 aa).

A helical transmembrane segment spans residues 6-26; it reads NLLLIALLFVSFMIWQAWQVD. Positions 30 to 44 are enriched in low complexity; sequence QPTAQTTQQTTNTAT. A disordered region spans residues 30 to 55; sequence QPTAQTTQQTTNTATGDKASQAVPGS. 4 helical membrane-spanning segments follow: residues 344 to 364, 419 to 439, 457 to 477, and 498 to 518; these read KFIH…TFIV, LGGC…YYML, LSAQ…MYFI, and PVIF…YYIV.

The protein belongs to the OXA1/ALB3/YidC family. Type 1 subfamily. In terms of assembly, interacts with the Sec translocase complex via SecD. Specifically interacts with transmembrane segments of nascent integral membrane proteins during membrane integration.

It is found in the cell inner membrane. Required for the insertion and/or proper folding and/or complex formation of integral membrane proteins into the membrane. Involved in integration of membrane proteins that insert both dependently and independently of the Sec translocase complex, as well as at least some lipoproteins. Aids folding of multispanning membrane proteins. In Yersinia pestis, this protein is Membrane protein insertase YidC.